We begin with the raw amino-acid sequence, 493 residues long: Glutamyl-tRNA(Gln) amidotransferase subunit A (493 aa).

Catalysis depends on charge relay system residues Lys78 and Ser158. Ser182 acts as the Acyl-ester intermediate in catalysis.

This sequence belongs to the amidase family. GatA subfamily. In terms of assembly, heterotrimer of A, B and C subunits.

The catalysed reaction is L-glutamyl-tRNA(Gln) + L-glutamine + ATP + H2O = L-glutaminyl-tRNA(Gln) + L-glutamate + ADP + phosphate + H(+). Allows the formation of correctly charged Gln-tRNA(Gln) through the transamidation of misacylated Glu-tRNA(Gln) in organisms which lack glutaminyl-tRNA synthetase. The reaction takes place in the presence of glutamine and ATP through an activated gamma-phospho-Glu-tRNA(Gln). The chain is Glutamyl-tRNA(Gln) amidotransferase subunit A from Rickettsia africae (strain ESF-5).